Here is a 276-residue protein sequence, read N- to C-terminus: MAIKKYKPTTNGLRNMSVSSFAEITTQTPEKSLLVPYKNQAGRNNQGKITVRHRGGGVKRKYRLIDFKRNKDNIIGKVATIEYDPNRSANIALIFYADGEKRYILAPKGLTVGTSIVSGPNSDIKVGNCLPLLNIPVGTTVHNIELKPGKGGQIARSSGASAQIISREDKYVLLRLQSSEVRKVLGSCRATIGEIGNEFYKLINYGKAGKKRFLGIRPTVRGSAMNPNDHPHGGGEGRAPIGRKSPMTPWGKKARGIKTRDRKKSSNELIIRRRTK.

Positions 221 to 276 (RGSAMNPNDHPHGGGEGRAPIGRKSPMTPWGKKARGIKTRDRKKSSNELIIRRRTK) are disordered. Positions 252–263 (KKARGIKTRDRK) are enriched in basic residues.

This sequence belongs to the universal ribosomal protein uL2 family. As to quaternary structure, part of the 50S ribosomal subunit. Forms a bridge to the 30S subunit in the 70S ribosome.

Its function is as follows. One of the primary rRNA binding proteins. Required for association of the 30S and 50S subunits to form the 70S ribosome, for tRNA binding and peptide bond formation. It has been suggested to have peptidyltransferase activity; this is somewhat controversial. Makes several contacts with the 16S rRNA in the 70S ribosome. The polypeptide is Large ribosomal subunit protein uL2 (Phytoplasma australiense).